A 311-amino-acid polypeptide reads, in one-letter code: Olfactory receptor 10J4 (311 aa).

At Met1 to Phe29 the chain is on the extracellular side. Residues Val30–Ile50 form a helical membrane-spanning segment. Residues Arg51 to His57 lie on the Cytoplasmic side of the membrane. The chain crosses the membrane as a helical span at residues Thr58–Ile78. At Asn79–Cys98 the chain is on the extracellular side. Cys98 and Cys180 are oxidised to a cystine. The chain crosses the membrane as a helical span at residues Ala99–Met119. Residues Gly120–Ser149 lie on the Cytoplasmic side of the membrane. Residues Trp150–Cys170 form a helical membrane-spanning segment. Residues Asp171–Leu202 are Extracellular-facing. A helical membrane pass occupies residues Ile203 to Val223. The Cytoplasmic segment spans residues Thr224–Lys237. Residues Ala238 to Gly254 form a helical membrane-spanning segment. At Arg255–Arg272 the chain is on the extracellular side. Residues Leu273–Leu292 traverse the membrane as a helical segment. Topologically, residues Arg293–Ser311 are cytoplasmic.

It belongs to the G-protein coupled receptor 1 family.

Its subcellular location is the cell membrane. Odorant receptor. This chain is Olfactory receptor 10J4 (OR10J4), found in Homo sapiens (Human).